The sequence spans 211 residues: tRNA (pseudouridine(54)-N(1))-methyltransferase (211 aa).

Residues Leu-128, Gly-150, and Cys-183 each contribute to the S-adenosyl-L-methionine site.

It belongs to the methyltransferase superfamily. TrmY family. In terms of assembly, homodimer.

The protein localises to the cytoplasm. The catalysed reaction is pseudouridine(54) in tRNA + S-adenosyl-L-methionine = N(1)-methylpseudouridine(54) in tRNA + S-adenosyl-L-homocysteine + H(+). Its function is as follows. Specifically catalyzes the N1-methylation of pseudouridine at position 54 (Psi54) in tRNAs. The protein is tRNA (pseudouridine(54)-N(1))-methyltransferase of Methanosarcina acetivorans (strain ATCC 35395 / DSM 2834 / JCM 12185 / C2A).